Consider the following 254-residue polypeptide: Receptor expression-enhancing protein 3 (254 aa).

A run of 3 helical transmembrane segments spans residues 1 to 21 (MVSW…YPAY), 35 to 55 (YVRW…ETVA), and 59 to 79 (LAWF…LLSP). The interval 162–232 (DEPVGHRPYQ…QSMKSVKTIK (71 aa)) is disordered. Positions 198–212 (EQTDEEAEGPFSDDE) are enriched in acidic residues. Position 200 is a phosphothreonine (threonine 200). Serine 209 is subject to Phosphoserine.

Belongs to the DP1 family.

It is found in the endoplasmic reticulum membrane. In terms of biological role, microtubule-binding protein required to ensure proper cell division and nuclear envelope reassembly by sequestering the endoplasmic reticulum away from chromosomes during mitosis. Probably acts by clearing the endoplasmic reticulum membrane from metaphase chromosomes. In Mus musculus (Mouse), this protein is Receptor expression-enhancing protein 3 (Reep3).